The primary structure comprises 240 residues: Sugar fermentation stimulation protein homolog (240 aa).

Belongs to the SfsA family.

This chain is Sugar fermentation stimulation protein homolog, found in Saccharolobus islandicus (strain M.16.4 / Kamchatka #3) (Sulfolobus islandicus).